A 244-amino-acid chain; its full sequence is Large ribosomal subunit protein uL2 (244 aa).

Basic residues predominate over residues 1-12 (MGKRILVQRRGR). Disordered stretches follow at residues 1 to 26 (MGKR…KRDG) and 193 to 225 (AMSP…KVGF).

This sequence belongs to the universal ribosomal protein uL2 family. As to quaternary structure, part of the 50S ribosomal subunit. Forms a bridge to the 30S subunit in the 70S ribosome.

One of the primary rRNA binding proteins. Required for association of the 30S and 50S subunits to form the 70S ribosome, for tRNA binding and peptide bond formation. It has been suggested to have peptidyltransferase activity; this is somewhat controversial. Makes several contacts with the 16S rRNA in the 70S ribosome. This is Large ribosomal subunit protein uL2 from Pyrobaculum calidifontis (strain DSM 21063 / JCM 11548 / VA1).